We begin with the raw amino-acid sequence, 380 residues long: Cytochrome b (380 aa).

A run of 4 helical transmembrane segments spans residues 34-54, 78-99, 114-134, and 179-199; these read FGSL…LLAM, WLIR…YFHI, WNTG…GYVL, and FFAL…IHLT. Heme b contacts are provided by H84 and H98. Heme b is bound by residues H183 and H197. An a ubiquinone-binding site is contributed by H202. The next 4 helical transmembrane spans lie at 227–247, 289–309, 321–341, and 348–368; these read LKDI…ALFS, LGGV…PFLH, LSQL…WVGS, and FIII…VLFP.

Belongs to the cytochrome b family. As to quaternary structure, the cytochrome bc1 complex contains 11 subunits: 3 respiratory subunits (MT-CYB, CYC1 and UQCRFS1), 2 core proteins (UQCRC1 and UQCRC2) and 6 low-molecular weight proteins (UQCRH/QCR6, UQCRB/QCR7, UQCRQ/QCR8, UQCR10/QCR9, UQCR11/QCR10 and a cleavage product of UQCRFS1). This cytochrome bc1 complex then forms a dimer. Requires heme b as cofactor.

The protein resides in the mitochondrion inner membrane. Component of the ubiquinol-cytochrome c reductase complex (complex III or cytochrome b-c1 complex) that is part of the mitochondrial respiratory chain. The b-c1 complex mediates electron transfer from ubiquinol to cytochrome c. Contributes to the generation of a proton gradient across the mitochondrial membrane that is then used for ATP synthesis. In Halobaena caerulea (Blue petrel), this protein is Cytochrome b (MT-CYB).